A 254-amino-acid polypeptide reads, in one-letter code: MAIANKNIIFVAGLGGIGFDTSREIVKSGPKNLVILDRIENPAAIAELKALNPKVTVTFYPYDVTVPVAETTKLLKTIFDKLKTVDLLINGAGILDDYQIERTIAVNFTGTVNTTTAIMAFWDKRKGGPGGVIANICSVTGFNAIYQVPVYSASKAAALSFTNSLAKLAPITGVTAYSINPGITKTTLVHKFNSWLDVEPRVAELLLEHPTQTTLQCAQNFVKAIEANQNGAIWKLDLGRLEAIEWTKHWDSGI.

Residue 10–33 (FVAGLGGIGFDTSREIVKSGPKNL) coordinates NAD(+). Ser-138 is a substrate binding site. Residue Tyr-151 is the Proton acceptor of the active site.

The protein belongs to the short-chain dehydrogenases/reductases (SDR) family. In terms of assembly, homodimer.

It catalyses the reaction a primary alcohol + NAD(+) = an aldehyde + NADH + H(+). The catalysed reaction is a secondary alcohol + NAD(+) = a ketone + NADH + H(+). This Drosophila buzzatii (Fruit fly) protein is Alcohol dehydrogenase 2 (Adh2).